The chain runs to 248 residues: Probable transcriptional regulatory protein FTW_1073 (248 aa).

Belongs to the TACO1 family.

The protein localises to the cytoplasm. The sequence is that of Probable transcriptional regulatory protein FTW_1073 from Francisella tularensis subsp. tularensis (strain WY96-3418).